A 353-amino-acid polypeptide reads, in one-letter code: O-antigen biosynthesis glycosyltransferase WclY (353 aa).

Residues 116–136 (SLIWGLLWCSIWLFFDKLVIL) form a helical membrane-spanning segment. 2 residues coordinate UDP: N190 and E271. The E(x7)E glycosyltransferase motif motif lies at 263–271 (EGFGLTVLE).

This sequence belongs to the glycosyltransferase group 1 family. Glycosyltransferase 4 subfamily.

It is found in the membrane. The protein operates within bacterial outer membrane biogenesis; LPS O-antigen biosynthesis. Functionally, involved in the assembly of the O-repeating unit during O-antigen biosynthesis. N-acetylglucosamine transferase accountable for the alpha-D-GlcNAc-1,4-beta-D-Gal linkage within the O-antigen. The sequence is that of O-antigen biosynthesis glycosyltransferase WclY from Escherichia coli.